The chain runs to 274 residues: Octanoyl-[GcvH]:protein N-octanoyltransferase (274 aa).

Residues 37 to 242 (QGNDAVVRTW…AMKTLGATLS (206 aa)) enclose the BPL/LPL catalytic domain. Catalysis depends on Cys141, which acts as the Acyl-thioester intermediate.

It belongs to the octanoyltransferase LipL family.

It carries out the reaction N(6)-octanoyl-L-lysyl-[glycine-cleavage complex H protein] + L-lysyl-[lipoyl-carrier protein] = N(6)-octanoyl-L-lysyl-[lipoyl-carrier protein] + L-lysyl-[glycine-cleavage complex H protein]. It functions in the pathway protein modification; protein lipoylation via endogenous pathway; protein N(6)-(lipoyl)lysine from octanoyl-[acyl-carrier-protein]. Functionally, catalyzes the amidotransfer (transamidation) of the octanoyl moiety from octanoyl-GcvH to the lipoyl domain of the E2 subunit of lipoate-dependent enzymes. This is Octanoyl-[GcvH]:protein N-octanoyltransferase from Macrococcus caseolyticus (strain JCSC5402) (Macrococcoides caseolyticum).